Consider the following 397-residue polypeptide: ATP phosphoribosyltransferase regulatory subunit (397 aa).

The protein belongs to the class-II aminoacyl-tRNA synthetase family. HisZ subfamily. As to quaternary structure, heteromultimer composed of HisG and HisZ subunits.

Its subcellular location is the cytoplasm. It participates in amino-acid biosynthesis; L-histidine biosynthesis; L-histidine from 5-phospho-alpha-D-ribose 1-diphosphate: step 1/9. Functionally, required for the first step of histidine biosynthesis. May allow the feedback regulation of ATP phosphoribosyltransferase activity by histidine. The polypeptide is ATP phosphoribosyltransferase regulatory subunit (Halalkalibacterium halodurans (strain ATCC BAA-125 / DSM 18197 / FERM 7344 / JCM 9153 / C-125) (Bacillus halodurans)).